We begin with the raw amino-acid sequence, 202 residues long: Small ribosomal subunit protein uS5 (202 aa).

The S5 DRBM domain occupies 50-113 (LKQEILNINV…REAKLNLTPV (64 aa)).

This sequence belongs to the universal ribosomal protein uS5 family. In terms of assembly, part of the 30S ribosomal subunit. Contacts protein S4.

With S4 and S12 plays an important role in translational accuracy. The chain is Small ribosomal subunit protein uS5 from Pyrobaculum islandicum (strain DSM 4184 / JCM 9189 / GEO3).